Here is a 234-residue protein sequence, read N- to C-terminus: Small ribosomal subunit protein eS1y (234 aa).

The segment covering 1-18 has biased composition (basic residues); the sequence is MAVGKNKRISKGKKGGKK. Positions 1–20 are disordered; sequence MAVGKNKRISKGKKGGKKKA.

Belongs to the eukaryotic ribosomal protein eS1 family. Component of the small ribosomal subunit. Mature ribosomes consist of a small (40S) and a large (60S) subunit. The 40S subunit contains about 33 different proteins and 1 molecule of RNA (18S). The 60S subunit contains about 49 different proteins and 3 molecules of RNA (25S, 5.8S and 5S).

It localises to the cytoplasm. In Vitis vinifera (Grape), this protein is Small ribosomal subunit protein eS1y.